The following is a 130-amino-acid chain: Hypocretin neuropeptide precursor (130 aa).

The first 32 residues, 1–32, serve as a signal peptide directing secretion; sequence MNPPSTKVPWAAVTLLLLLLLPPALLSPGAAA. Q33 carries the post-translational modification Pyrrolidone carboxylic acid. Disulfide bonds link C38–C44 and C39–C46. L65 carries the leucine amide modification. Residue M96 is modified to Methionine amide. Residues 97–130 constitute a propeptide, removed in mature form; the sequence is GRRAGAEPAPRPCPGRRCPVVAVPSAAPGGRSGV.

This sequence belongs to the orexin family. In terms of processing, specific enzymatic cleavages at paired basic residues yield the different active peptides.

The protein localises to the rough endoplasmic reticulum. It localises to the cytoplasmic vesicle. The protein resides in the synapse. Neuropeptides that play a significant role in the regulation of food intake and sleep-wakefulness, possibly by coordinating the complex behavioral and physiologic responses of these complementary homeostatic functions. A broader role in the homeostatic regulation of energy metabolism, autonomic function, hormonal balance and the regulation of body fluids, is also suggested. Functionally, binds to orexin receptors HCRTR1/OX1R and HCRTR2/OX2R with a high affinity. Stimulates food intake. Modulates pituitary luteinizing hormone secretion in an ovarian steroid-dependent manner. Its function is as follows. Binds to orexin receptor HCRTR2/OX2R only. Stimulates food intake. Modulates pituitary luteinizing hormone secretion in an ovarian steroid-dependent manner. This is Hypocretin neuropeptide precursor (HCRT) from Canis lupus familiaris (Dog).